Consider the following 286-residue polypeptide: Thymidylate synthase (286 aa).

Residue 140-141 (RR) participates in dUMP binding. Cys-161 functions as the Nucleophile in the catalytic mechanism. Residues 185-188 (RSND), Asn-196, and 226-228 (HIY) contribute to the dUMP site. A (6R)-5,10-methylene-5,6,7,8-tetrahydrofolate-binding site is contributed by Asp-188. Ala-285 contributes to the (6R)-5,10-methylene-5,6,7,8-tetrahydrofolate binding site.

Belongs to the thymidylate synthase family. Bacterial-type ThyA subfamily. Homodimer.

Its subcellular location is the cytoplasm. The enzyme catalyses dUMP + (6R)-5,10-methylene-5,6,7,8-tetrahydrofolate = 7,8-dihydrofolate + dTMP. It functions in the pathway pyrimidine metabolism; dTTP biosynthesis. In terms of biological role, catalyzes the reductive methylation of 2'-deoxyuridine-5'-monophosphate (dUMP) to 2'-deoxythymidine-5'-monophosphate (dTMP) while utilizing 5,10-methylenetetrahydrofolate (mTHF) as the methyl donor and reductant in the reaction, yielding dihydrofolate (DHF) as a by-product. This enzymatic reaction provides an intracellular de novo source of dTMP, an essential precursor for DNA biosynthesis. This chain is Thymidylate synthase, found in Streptococcus thermophilus (strain ATCC BAA-250 / LMG 18311).